The chain runs to 572 residues: Probable terpene synthase 13 (572 aa).

Positions 326, 330, and 478 each coordinate Mg(2+). The short motif at 326 to 330 (DDIFD) is the DDXXD motif element.

Belongs to the terpene synthase family. Mg(2+) serves as cofactor.

In terms of biological role, probable sesquiterpene synthase. This chain is Probable terpene synthase 13 (TPS13), found in Ricinus communis (Castor bean).